A 672-amino-acid polypeptide reads, in one-letter code: uncharacterized protein (672 aa).

Over residues 1–10 (MAKSDGDDPL) the composition is skewed to basic and acidic residues. Positions 1 to 40 (MAKSDGDDPLRPASPRLRSSRRHSLRYSAYTGGPDPLAPP) are disordered.

This is an uncharacterized protein from Mycobacterium tuberculosis (strain CDC 1551 / Oshkosh).